A 205-amino-acid chain; its full sequence is MGGKWSKSSIVGWPAVGERMRQTPTAAEGVGAVSRDLDRRGAITSSNTRTTNPDLAWLEAQEEEEVGFPVRPQVPVRPMTYKAAVDLSHFLKEKGGLEGLIYSKKRGDTLDLWVYHTQGYFPDWQNYTPGPGIRYPLTLGWCFKLVPVDPEEVEKANEGENNCLLHPMSQHGMEDEDREVLRWKFDSSLALRHIARERHPEFYQD.

The N-myristoyl glycine; by host moiety is linked to residue Gly-2. Ser-6 is modified (phosphoserine; by host). The interval 62–65 (EEEE) is acidic; interacts with host PACS1 and PACS2; stabilizes the interaction of NEF/MHC-I with host AP1M1; necessary for MHC-I internalization. Residues 69–78 (PVRPQVPVRP) are SH3-binding; interaction with Src family tyrosine kinases. The PxxP; stabilizes the interaction of NEF/MHC-I with host AP1M1; necessary for MHC-I internalization motif lies at 72-75 (PQVP). The segment at 108–124 (DTLDLWVYHTQGYFPDW) is mediates dimerization, Nef-PTE1 interaction. A binding to ATP6V1H region spans residues 148-180 (VDPEEVEKANEGENNCLLHPMSQHGMEDEDREV). The Dileucine internalization motif; necessary for CD4 internalization signature appears at 164 to 165 (LL). Residues 174–175 (ED) carry the Diacidic; necessary for CD4 internalization motif.

The protein belongs to the lentivirus primate group Nef protein family. As to quaternary structure, monomer; cytosolic form. Homodimer; membrane bound form. Interacts with Nef associated p21-activated kinase (PAK2); this interaction activates PAK2. Associates with the Nef-MHC-I-AP1 complex; this complex is required for MHC-I internalization. Interacts (via C-terminus) with host PI3-kinase. Interacts with host PACS1; this interaction seems to be weak. Interacts with host PACS2. Interacts with host LCK and MAPK3; these interactions inhibit the kinase activity of the latter. Interacts with host ATP6V1H; this interaction may play a role in CD4 endocytosis. Associates with the CD4-Nef-AP2 complex; this complex is required for CD4 internalization. Interacts with host AP2 subunit alpha and AP2 subunit sigma2. Interacts with TCR-zeta chain; this interaction up-regulates the Fas ligand (FasL) surface expression. Interacts with host HCK, LYN, and SRC; these interactions activate the Src family kinases. Interacts with MAP3K5; this interaction inhibits the Fas and TNFR-mediated death signals. Interacts with beta-COP and PTE1. Interacts with human RACK1; this increases Nef phosphorylation by PKC. Interacts with TP53; this interaction decreases the half-life of TP53, protecting the infected cell against p53-mediated apoptosis. The virion-associated Nef proteins are cleaved by the viral protease to release the soluble C-terminal core protein. Nef is probably cleaved concomitantly with viral structural proteins on maturation of virus particles. Post-translationally, myristoylated. In terms of processing, phosphorylated on serine residues, probably by host PKCdelta and theta.

Its subcellular location is the host cell membrane. It is found in the virion. It localises to the secreted. The protein resides in the host Golgi apparatus membrane. Functionally, factor of infectivity and pathogenicity, required for optimal virus replication. Alters numerous pathways of T-lymphocyte function and down-regulates immunity surface molecules in order to evade host defense and increase viral infectivity. Alters the functionality of other immunity cells, like dendritic cells, monocytes/macrophages and NK cells. In infected CD4(+) T-lymphocytes, down-regulates the surface MHC-I, mature MHC-II, CD4, CD28, CCR5 and CXCR4 molecules. Mediates internalization and degradation of host CD4 through the interaction of with the cytoplasmic tail of CD4, the recruitment of AP-2 (clathrin adapter protein complex 2), internalization through clathrin coated pits, and subsequent transport to endosomes and lysosomes for degradation. Diverts host MHC-I molecules to the trans-Golgi network-associated endosomal compartments by an endocytic pathway to finally target them for degradation. MHC-I down-regulation may involve AP-1 (clathrin adapter protein complex 1) or possibly Src family kinase-ZAP70/Syk-PI3K cascade recruited by PACS2. In consequence infected cells are masked for immune recognition by cytotoxic T-lymphocytes. Decreasing the number of immune receptors also prevents reinfection by more HIV particles (superinfection). Down-regulates host SERINC3 and SERINC5 thereby excluding these proteins from the viral particles. Virion infectivity is drastically higher when SERINC3 or SERINC5 are excluded from the viral envelope, because these host antiviral proteins impair the membrane fusion event necessary for subsequent virion penetration. In terms of biological role, bypasses host T-cell signaling by inducing a transcriptional program nearly identical to that of anti-CD3 cell activation. Interaction with TCR-zeta chain up-regulates the Fas ligand (FasL). Increasing surface FasL molecules and decreasing surface MHC-I molecules on infected CD4(+) cells send attacking cytotoxic CD8+ T-lymphocytes into apoptosis. Its function is as follows. Plays a role in optimizing the host cell environment for viral replication without causing cell death by apoptosis. Protects the infected cells from apoptosis in order to keep them alive until the next virus generation is ready to strike. Inhibits the Fas and TNFR-mediated death signals by blocking MAP3K5/ASK1. Decreases the half-life of TP53, protecting the infected cell against p53-mediated apoptosis. Inhibits the apoptotic signals regulated by the Bcl-2 family proteins through the formation of a Nef/PI3-kinase/PAK2 complex that leads to activation of PAK2 and induces phosphorylation of host BAD. Functionally, extracellular Nef protein targets CD4(+) T-lymphocytes for apoptosis by interacting with CXCR4 surface receptors. This chain is Protein Nef, found in Human immunodeficiency virus type 1 group M subtype F1 (isolate VI850) (HIV-1).